A 349-amino-acid polypeptide reads, in one-letter code: Twinfilin-2 (349 aa).

ADF-H domains lie at 4-139 and 177-313; these read QTGI…KHVS and GLAF…DEVH. The disordered stretch occupies residues 324–349; that stretch reads AKPKGPVGKRGQKRLIKGPGENGEDS.

The protein belongs to the actin-binding proteins ADF family. Twinfilin subfamily. In terms of assembly, interacts with G-actin; ADP-actin form and capping protein (CP).

The protein localises to the cytoplasm. It localises to the cytoskeleton. Its subcellular location is the perinuclear region. Its function is as follows. Actin-binding protein involved in motile and morphological processes. Inhibits actin polymerization, likely by sequestering G-actin. This Gallus gallus (Chicken) protein is Twinfilin-2 (TWF2).